A 1030-amino-acid polypeptide reads, in one-letter code: Importin beta-like SAD2 homolog (1030 aa).

Residue methionine 1 is modified to N-acetylmethionine. Residues alanine 25–glutamine 99 form the Importin N-terminal domain. 2 disordered regions span residues alanine 886 to leucine 928 and serine 940 to glutamate 964. Acidic residues-rich tracts occupy residues glutamate 890–aspartate 924 and aspartate 943–glutamate 964.

Belongs to the importin beta family.

It localises to the cytoplasm. It is found in the nucleus. Functionally, functions probably in nuclear protein import, either by acting as autonomous nuclear transport receptor or as an adapter-like protein in association with other importin subunits. This is Importin beta-like SAD2 homolog from Arabidopsis thaliana (Mouse-ear cress).